The primary structure comprises 762 residues: Dolichyl-phosphate-mannose--protein mannosyltransferase 4 (762 aa).

Residues 1–10 (MSVPKKRNHG) are compositionally biased toward basic residues. Positions 1–24 (MSVPKKRNHGKLPPSTKDVDDPSL) are disordered. Residues 1 to 53 (MSVPKKRNHGKLPPSTKDVDDPSLKYTKAAPKCEQVAEHWLLQPLPEPESRYS) lie on the Lumenal side of the membrane. The chain crosses the membrane as a helical span at residues 54–74 (FWVTIVTLLAFAARFYKIWYP). Topologically, residues 75-136 (KEVVFDEVHF…IGYSYETHPA (62 aa)) are cytoplasmic. Residues 137–157 (PYIAYRSFNAILGTLTVPIMF) traverse the membrane as a helical segment. Residues 158-166 (NTLKELNFR) lie on the Lumenal side of the membrane. A helical membrane pass occupies residues 167 to 187 (AITCAFASLLVAIDTAHVTET). Over 188–189 (RL) the chain is Cytoplasmic. The chain crosses the membrane as a helical span at residues 190 to 210 (ILLDAILIISIAATMYCYVRF). Residues 211–217 (YKCQLRQ) are Lumenal-facing. The chain crosses the membrane as a helical span at residues 218–238 (PFTWSWYIWLHATGLSLSFVI). The Cytoplasmic portion of the chain corresponds to 239–242 (STKY). Residues 243 to 263 (VGVMTYSAIGFAAVVNLWQLL) traverse the membrane as a helical segment. Residues 264-283 (DIKAGLSLRQFMRHFSKRLN) are Lumenal-facing. A helical transmembrane segment spans residues 284–304 (GLVLIPFVIYLFWFWVHFTVL). Residues 305–593 (NTSGPGDAFM…NGDEKKQIYF (289 aa)) are Cytoplasmic-facing. 3 consecutive MIR domains span residues 331–391 (SKTV…VLPP), 399–458 (GQAV…FQPL), and 464–521 (GHVL…VDEI). A helical transmembrane segment spans residues 594–614 (IGNIIGWWFQVISLAVFVGII). Residues 615-635 (VADLITRHRGYYALNKMTREK) lie on the Lumenal side of the membrane. A helical transmembrane segment spans residues 636 to 656 (LYGPLMFFFVSWCCHYFPFFL). Topologically, residues 657–716 (MARQKFLHHYLPAHLIACLFSGALWEVIFSDCKSLDLEKDEDISGASYERNPKVYVKPYT) are cytoplasmic. The helical transmembrane segment at 717 to 737 (VFLVCVSCAVAWFFVYFSPLV) threads the bilayer. The Lumenal portion of the chain corresponds to 738–762 (YGDVSLSPSEVVSREWFDIELNFSK). N-linked (GlcNAc...) asparagine glycosylation is present at N759.

The protein belongs to the glycosyltransferase 39 family. Forms a functional homodimer and may form a heterodimer with PMT6. Interacts with RCR1.

The protein localises to the endoplasmic reticulum membrane. It carries out the reaction a di-trans,poly-cis-dolichyl beta-D-mannosyl phosphate + L-seryl-[protein] = 3-O-(alpha-D-mannosyl)-L-seryl-[protein] + a di-trans,poly-cis-dolichyl phosphate + H(+). It catalyses the reaction a di-trans,poly-cis-dolichyl beta-D-mannosyl phosphate + L-threonyl-[protein] = 3-O-(alpha-D-mannosyl)-L-threonyl-[protein] + a di-trans,poly-cis-dolichyl phosphate + H(+). Its pathway is protein modification; protein glycosylation. Protein O-mannosyltransferase involved in O-glycosylation which is essential for cell wall rigidity. Forms a homodimeric complex to transfer mannose from Dol-P-mannose to Ser or Thr residues on proteins. Specifically acts on secretory proteins with an ER-luminally oriented Ser/Thr-rich region flanked by a membrane anchor such as FUS1, AXL2, GAS1, KEX2, MID2, WSC1, WSC2, OPY2, PRM5, RAX2, or YNL176. This chain is Dolichyl-phosphate-mannose--protein mannosyltransferase 4, found in Saccharomyces cerevisiae (strain ATCC 204508 / S288c) (Baker's yeast).